Here is a 58-residue protein sequence, read N- to C-terminus: Large ribosomal subunit protein uL30 (58 aa).

The protein belongs to the universal ribosomal protein uL30 family. In terms of assembly, part of the 50S ribosomal subunit.

This chain is Large ribosomal subunit protein uL30, found in Desulfovibrio desulfuricans (strain ATCC 27774 / DSM 6949 / MB).